The primary structure comprises 343 residues: Heat-inducible transcription repressor HrcA (343 aa).

The protein belongs to the HrcA family.

Functionally, negative regulator of class I heat shock genes (grpE-dnaK-dnaJ and groELS operons). Prevents heat-shock induction of these operons. The sequence is that of Heat-inducible transcription repressor HrcA from Mycolicibacterium gilvum (strain PYR-GCK) (Mycobacterium gilvum (strain PYR-GCK)).